The primary structure comprises 156 residues: Succinate dehydrogenase assembly factor 2-B, mitochondrial (156 aa).

The transit peptide at 1-24 (MLRQLIVSTVGRRMPLQMISQSRL) directs the protein to the mitochondrion.

It belongs to the SDHAF2 family. Interacts with the flavoprotein subunit within the SDH catalytic dimer.

Its subcellular location is the mitochondrion matrix. In terms of biological role, plays an essential role in the assembly of succinate dehydrogenase (SDH), an enzyme complex (also referred to as respiratory complex II) that is a component of both the tricarboxylic acid (TCA) cycle and the mitochondrial electron transport chain, and which couples the oxidation of succinate to fumarate with the reduction of ubiquinone (coenzyme Q) to ubiquinol. Required for flavinylation (covalent attachment of FAD) of the flavoprotein subunit of the SDH catalytic dimer. The chain is Succinate dehydrogenase assembly factor 2-B, mitochondrial from Drosophila erecta (Fruit fly).